The primary structure comprises 166 residues: Packaging efficiency factor P6 (166 aa).

The disordered stretch occupies residues 134–166 (ILPESAGDQQEAEPVPSVGDQQETAPRKRFRAI).

Heterodimer of P6 and P9; further multimerizes as hexamers of heterodimers. Part of the dodecameric portal complex that is composed of the packaging efficiency factor P6, the DNA packaging ATPase P9, and the internal heterododecamer P20/P22 which spans the virion inner membrane.

It localises to the virion. Together with the packaging ATPase P9, forms the external part of the portal vertex that is embeded in the capsid and which plays critical roles in genome packaging and genome ejection. Both proteins multimerize as a single ring-shaped heterdodecamer arranged around a central channel. This is Packaging efficiency factor P6 (VI) from Acinetobacter calcoaceticus (Arthrobacter siderocapsulatus).